Consider the following 156-residue polypeptide: Cell division protein SepF (156 aa).

The interval 15–58 (SDVVPEDEDDEVIDEEPESSFDTDRSVTPIPAASTQPSTSQRKS) is disordered. Residues 18–35 (VPEDEDDEVIDEEPESSF) are compositionally biased toward acidic residues. Over residues 47–57 (ASTQPSTSQRK) the composition is skewed to polar residues.

It belongs to the SepF family. Homodimer. Interacts with FtsZ.

The protein resides in the cytoplasm. In terms of biological role, cell division protein that is part of the divisome complex and is recruited early to the Z-ring. Probably stimulates Z-ring formation, perhaps through the cross-linking of FtsZ protofilaments. Its function overlaps with FtsA. In Bifidobacterium animalis subsp. lactis (strain AD011), this protein is Cell division protein SepF.